Here is a 237-residue protein sequence, read N- to C-terminus: Speedy protein E4 (237 aa).

A disordered region spans residues 1–61 (MASGQARPPF…KRKSEWSDES (61 aa)).

The protein belongs to the Speedy/Ringo family. As to expression, predominantly expressed in testis.

The protein is Speedy protein E4 of Homo sapiens (Human).